The chain runs to 139 residues: ATP synthase epsilon chain (139 aa).

The protein belongs to the ATPase epsilon chain family. In terms of assembly, F-type ATPases have 2 components, CF(1) - the catalytic core - and CF(0) - the membrane proton channel. CF(1) has five subunits: alpha(3), beta(3), gamma(1), delta(1), epsilon(1). CF(0) has three main subunits: a, b and c.

The protein resides in the cell inner membrane. Its function is as follows. Produces ATP from ADP in the presence of a proton gradient across the membrane. This is ATP synthase epsilon chain from Serratia proteamaculans (strain 568).